Reading from the N-terminus, the 151-residue chain is Deoxyuridine 5'-triphosphate nucleotidohydrolase (151 aa).

Substrate-binding positions include 70–72 (RSG), Asn-83, 87–89 (LID), and Met-97.

Belongs to the dUTPase family. It depends on Mg(2+) as a cofactor.

It carries out the reaction dUTP + H2O = dUMP + diphosphate + H(+). Its pathway is pyrimidine metabolism; dUMP biosynthesis; dUMP from dCTP (dUTP route): step 2/2. In terms of biological role, this enzyme is involved in nucleotide metabolism: it produces dUMP, the immediate precursor of thymidine nucleotides and it decreases the intracellular concentration of dUTP so that uracil cannot be incorporated into DNA. This Pseudomonas putida (strain W619) protein is Deoxyuridine 5'-triphosphate nucleotidohydrolase.